A 226-amino-acid chain; its full sequence is Peptidyl-prolyl cis-trans isomerase CYP23 (226 aa).

The signal sequence occupies residues 1 to 22 (MGITRNLILGLACLAFVSIAKA). One can recognise a PPIase cyclophilin-type domain in the interval 34–191 (VVFQTSYGDI…ERITILSTYY (158 aa)).

Belongs to the cyclophilin-type PPIase family. Ubiquitous. Lower expression in roots.

It is found in the endoplasmic reticulum. It catalyses the reaction [protein]-peptidylproline (omega=180) = [protein]-peptidylproline (omega=0). PPIases accelerate the folding of proteins. It catalyzes the cis-trans isomerization of proline imidic peptide bonds in oligopeptides. This is Peptidyl-prolyl cis-trans isomerase CYP23 (CYP23) from Arabidopsis thaliana (Mouse-ear cress).